The chain runs to 187 residues: Ribosome-recycling factor (187 aa).

It belongs to the RRF family.

The protein resides in the cytoplasm. In terms of biological role, responsible for the release of ribosomes from messenger RNA at the termination of protein biosynthesis. May increase the efficiency of translation by recycling ribosomes from one round of translation to another. The chain is Ribosome-recycling factor from Methylorubrum extorquens (strain CM4 / NCIMB 13688) (Methylobacterium extorquens).